A 344-amino-acid chain; its full sequence is Uroporphyrinogen decarboxylase (344 aa).

Residues 23–27, D73, Y149, T204, and H321 each bind substrate; that span reads RQAGR.

It belongs to the uroporphyrinogen decarboxylase family. In terms of assembly, homodimer.

It is found in the cytoplasm. It carries out the reaction uroporphyrinogen III + 4 H(+) = coproporphyrinogen III + 4 CO2. It functions in the pathway porphyrin-containing compound metabolism; protoporphyrin-IX biosynthesis; coproporphyrinogen-III from 5-aminolevulinate: step 4/4. In terms of biological role, catalyzes the decarboxylation of four acetate groups of uroporphyrinogen-III to yield coproporphyrinogen-III. The sequence is that of Uroporphyrinogen decarboxylase from Francisella philomiragia subsp. philomiragia (strain ATCC 25017 / CCUG 19701 / FSC 153 / O#319-036).